A 317-amino-acid chain; its full sequence is Ferrochelatase (317 aa).

His187 and Glu268 together coordinate Fe cation.

Belongs to the ferrochelatase family.

Its subcellular location is the cytoplasm. It carries out the reaction heme b + 2 H(+) = protoporphyrin IX + Fe(2+). The protein operates within porphyrin-containing compound metabolism; protoheme biosynthesis; protoheme from protoporphyrin-IX: step 1/1. Its function is as follows. Catalyzes the ferrous insertion into protoporphyrin IX. This chain is Ferrochelatase, found in Campylobacter concisus (strain 13826).